The sequence spans 606 residues: MSSKRHILTAVAWPYANGPRHIGHVSGFGVPSDVFARFQRMSGNNVLMVSGTDEHGTPIQVLADQEGVSARELADRYNRIIAEDLVALGLSYDLFTRTTTANHYAVVQELFTGLYRNGYIFSKTTKGAISPSTGRTLPDRYVEGTCPICGYDGARGDQCDNCGKQLDPTDLINPRSKINGETPEFVDTEHFMLDLPAFAEQLSEWLKSKGGEWRPNVLKFSLNLLDELQPRAITRDLDWGVPIPLEGWRDQPNKRLYVWFDAVIGYLSASIEWAKRTGDPEAWRKWWQNSDAESFYFMGKDNIVFHSEIWPAMLLGYSGKGSKGGEPGSLGALNLPTEVVSSEFLTMEGRKFSSSRRVVIYVRDFLERYDADALRYYIIAAGPETQDTDFTWAEFVRRNNDELVATWGNLVNRSISMAAKNIGHIPEAGELTDADRAVLDASKAAFATVGERLNRAQFKAALQEAMRVVAEANKYFSEQAPWKLKKTDPKRMETVLHVALQLVSDAKTLLTPFLPASSNKVYEMLGGTGTWTGMPRLEEATDSIGGEEGVSTYPVITGDYADNEARWESIPIVPGTPLKPPTPLFRKLDQSVVDEELARLEAAAGA.

The 'HIGH' region motif lies at Pro14 to His24. The Zn(2+) site is built by Cys146, Cys149, Cys159, and Cys162. A 'KMSKS' region motif is present at residues Lys351 to Ser355. Ser354 lines the ATP pocket.

This sequence belongs to the class-I aminoacyl-tRNA synthetase family. MetG type 1 subfamily. Monomer. Zn(2+) serves as cofactor.

The protein localises to the cytoplasm. It carries out the reaction tRNA(Met) + L-methionine + ATP = L-methionyl-tRNA(Met) + AMP + diphosphate. In terms of biological role, is required not only for elongation of protein synthesis but also for the initiation of all mRNA translation through initiator tRNA(fMet) aminoacylation. This chain is Methionine--tRNA ligase, found in Thermobifida fusca (strain YX).